The sequence spans 241 residues: Uridylate kinase (241 aa).

12-15 (KLSG) contacts ATP. The interval 20-25 (GDKGTG) is involved in allosteric activation by GTP. Gly54 provides a ligand contact to UMP. ATP-binding residues include Gly55 and Arg59. UMP contacts are provided by residues Asp74 and 135–142 (TGSPYFST). ATP is bound by residues Asn163, Tyr169, and Asp172.

Belongs to the UMP kinase family. In terms of assembly, homohexamer.

It localises to the cytoplasm. The enzyme catalyses UMP + ATP = UDP + ADP. It functions in the pathway pyrimidine metabolism; CTP biosynthesis via de novo pathway; UDP from UMP (UMPK route): step 1/1. Allosterically activated by GTP. Inhibited by UTP. In terms of biological role, catalyzes the reversible phosphorylation of UMP to UDP. The sequence is that of Uridylate kinase from Pediococcus pentosaceus (strain ATCC 25745 / CCUG 21536 / LMG 10740 / 183-1w).